A 156-amino-acid polypeptide reads, in one-letter code: Cyanate hydratase (156 aa).

Catalysis depends on residues R96, E99, and S122.

The protein belongs to the cyanase family.

The catalysed reaction is cyanate + hydrogencarbonate + 3 H(+) = NH4(+) + 2 CO2. In terms of biological role, catalyzes the reaction of cyanate with bicarbonate to produce ammonia and carbon dioxide. This is Cyanate hydratase from Mycobacteroides abscessus (strain ATCC 19977 / DSM 44196 / CCUG 20993 / CIP 104536 / JCM 13569 / NCTC 13031 / TMC 1543 / L948) (Mycobacterium abscessus).